The following is a 1389-amino-acid chain: MGNLFGHKRWYEVRDKKDFKIKRKVKVKRNYDGNKYILNINENNNKEKIDNNKFIRKYINYKKNDNILKEFTRKFHAGNILFKLKGKEGIIRIENNDDFLETEEVVLYIEAYGKSEKLKALGITKKKIIDEAIRQGITKDDKKIEIKRQENEEEIEIDIRDEYTNKTLNDCSIILRIIENDELETKKSIYEIFKNINMSLYKIIEKIIENETEKVFENRYYEEHLREKLLKDDKIDVILTNFMEIREKIKSNLEILGFVKFYLNVGGDKKKSKNKKMLVEKILNINVDLTVEDIADFVIKELEFWNITKRIEKVKKVNNEFLEKRRNRTYIKSYVLLDKHEKFKIERENKKDKIVKFFVENIKNNSIKEKIEKILAEFKIDELIKKLEKELKKGNCDTEIFGIFKKHYKVNFDSKKFSKKSDEEKELYKIIYRYLKGRIEKILVNEQKVRLKKMEKIEIEKILNESILSEKILKRVKQYTLEHIMYLGKLRHNDIDMTTVNTDDFSRLHAKEELDLELITFFASTNMELNKIFSRENINNDENIDFFGGDREKNYVLDKKILNSKIKIIRDLDFIDNKNNITNNFIRKFTKIGTNERNRILHAISKERDLQGTQDDYNKVINIIQNLKISDEEVSKALNLDVVFKDKKNIITKINDIKISEENNNDIKYLPSFSKVLPEILNLYRNNPKNEPFDTIETEKIVLNALIYVNKELYKKLILEDDLEENESKNIFLQELKKTLGNIDEIDENIIENYYKNAQISASKGNNKAIKKYQKKVIECYIGYLRKNYEELFDFSDFKMNIQEIKKQIKDINDNKTYERITVKTSDKTIVINDDFEYIISIFALLNSNAVINKIRNRFFATSVWLNTSEYQNIIDILDEIMQLNTLRNECITENWNLNLEEFIQKMKEIEKDFDDFKIQTKKEIFNNYYEDIKNNILTEFKDDINGCDVLEKKLEKIVIFDDETKFEIDKKSNILQDEQRKLSNINKKDLKKKVDQYIKDKDQEIKSKILCRIIFNSDFLKKYKKEIDNLIEDMESENENKFQEIYYPKERKNELYIYKKNLFLNIGNPNFDKIYGLISNDIKMADAKFLFNIDGKNIRKNKISEIDAILKNLNDKLNGYSKEYKEKYIKKLKENDDFFAKNIQNKNYKSFEKDYNRVSEYKKIRDLVEFNYLNKIESYLIDINWKLAIQMARFERDMHYIVNGLRELGIIKLSGYNTGISRAYPKRNGSDGFYTTTAYYKFFDEESYKKFEKICYGFGIDLSENSEINKPENESIRNYISHFYIVRNPFADYSIAEQIDRVSNLLSYSTRYNNSTYASVFEVFKKDVNLDYDELKKKFKLIGNNDILERLMKPKKVSVLELESYNSDYIKNLIIELLTKIENTNDTL.

Residues 1-347 are NTD; sequence MGNLFGHKRW…DKHEKFKIER (347 aa). Residue Arg219 coordinates crRNA. 3 binds crRNA regions span residues 330 to 342, 405 to 408, and 432 to 436; these read YIKS…KHEK, KKHY, and YRYLK. The helical-1 stretch occupies residues 348–498; sequence ENKKDKIVKF…KLRHNDIDMT (151 aa). Catalysis depends on for pre-crRNA processing residues Arg438 and Lys441. Lys441 contributes to the crRNA binding site. Residues 471–475 are binds crRNA; sequence KILKR. Lys489 provides a ligand contact to crRNA. Residues 499–636 form an HEPN-like fold 1-I region; the sequence is TVNTDDFSRL…LKISDEEVSK (138 aa). The interval 502 to 509 is binds crRNA; the sequence is TDDFSRLH. Residues Arg597 and His602 each act as for target ssRNA cleavage in the active site. Residues 637–828 form a helical-2 region; it reads ALNLDVVFKD…ERITVKTSDK (192 aa). CrRNA is bound at residue Gln759. The HEPN-like fold 1-II stretch occupies residues 829–899; that stretch reads TIVINDDFEY…ECITENWNLN (71 aa). Positions 853 to 858 are binds crRNA; sequence NKIRNR. Trp865 contributes to the crRNA binding site. Coiled coils occupy residues 893-920, 968-1046, and 1101-1131; these read TENW…FKIQ, EIDK…FQEI, and KNKI…KYIK. Positions 900-1170 are linker; sequence LEEFIQKMKE…EYKKIRDLVE (271 aa). Residues 1170–1290 are HEPN-like fold 2; the sequence is EFNYLNKIES…ISHFYIVRNP (121 aa). Residues Arg1278 and His1283 each act as for target ssRNA cleavage in the active site. 2 binds crRNA regions span residues 1311 to 1316 and 1338 to 1339; these read TRYNNS and KK.

Belongs to the CRISPR-associated endoribonuclease Cas13a family. As to quaternary structure, monomer. Mg(2+) serves as cofactor.

With respect to regulation, RNase activity on target is decreased by EDTA. Target RNA acts as an activator for non-specific ssRNA degradation. Functionally, CRISPR (clustered regularly interspaced short palindromic repeat), is an adaptive immune system that provides protection against mobile genetic elements (viruses, transposable elements and conjugative plasmids). CRISPR clusters contain sequences complementary to antecedent mobile elements (spacers) and target invading nucleic acids. Unlike many single-component effectors, this CRISPR-Cas system targets RNA. CRISPR clusters are transcribed from pre-CRISPR RNA (crRNA) and processed into crRNA (optimally 28 nucleotides in this system) by this protein. This protein processes pre-crRNA at a 'non-typical' site 1 nucleotide upstream of the pre-crRNA stem-loop; it cleaves pre-crRNA from L.buccalis and L.wadei in a similar fashion, whereas the enzymes from the latter 2 bacteria cleave their own pre-crRNA 3 nt further upstream. When the appropriate target sequences are cloned into the CRISPR array, confers immunity to ssRNA(+) enterobacteria phage MS2. Cleaves linear target ssRNA in a crRNA-dependent fashion, preferentially before U residues; has no activity on partially dsRNA, ssDNA or dsDNA. RNA secondary structure surrounding the target influence the cleavage site and efficiency; unlike other CRISPR-Cas effectors Cas13a cleaves outside of the crRNA binding site. In the presence of a viable RNA target other RNAs are also degraded (called collateral RNA degradation), suggesting this type of CRISPR-Cas might also prevent viral spread by inducing programmed cell death or dormancy. This system has a 3' protospacer flanking site (PFS), it does not cleave when the 3' PFS is G (PFS is equivalent to PAM, the protospacer adjacent motif). Mutations of its active site residues results in an RNA-programmed RNA-binding protein. The chain is CRISPR-associated endoribonuclease Cas13a from Leptotrichia shahii (strain DSM 19757 / CCUG 47503 / CIP 107916 / JCM 16776 / LB37).